Consider the following 409-residue polypeptide: LL-diaminopimelate aminotransferase (409 aa).

The substrate site is built by Tyr15 and Gly42. Residues Tyr72, Ala108–Lys109, Tyr132, Asn186, Tyr217, and Ser245–Ser247 contribute to the pyridoxal 5'-phosphate site. Substrate-binding residues include Lys109, Tyr132, and Asn186. The residue at position 248 (Lys248) is an N6-(pyridoxal phosphate)lysine. Residues Arg256 and Asn291 each coordinate pyridoxal 5'-phosphate. Substrate is bound by residues Asn291 and Arg387.

This sequence belongs to the class-I pyridoxal-phosphate-dependent aminotransferase family. LL-diaminopimelate aminotransferase subfamily. Homodimer. It depends on pyridoxal 5'-phosphate as a cofactor.

It carries out the reaction (2S,6S)-2,6-diaminopimelate + 2-oxoglutarate = (S)-2,3,4,5-tetrahydrodipicolinate + L-glutamate + H2O + H(+). Its pathway is amino-acid biosynthesis; L-lysine biosynthesis via DAP pathway; LL-2,6-diaminopimelate from (S)-tetrahydrodipicolinate (aminotransferase route): step 1/1. In terms of biological role, involved in the synthesis of meso-diaminopimelate (m-DAP or DL-DAP), required for both lysine and peptidoglycan biosynthesis. Catalyzes the direct conversion of tetrahydrodipicolinate to LL-diaminopimelate. The sequence is that of LL-diaminopimelate aminotransferase from Parabacteroides distasonis (strain ATCC 8503 / DSM 20701 / CIP 104284 / JCM 5825 / NCTC 11152).